A 480-amino-acid chain; its full sequence is Radical SAM Nalpha-GlyT isomerase (480 aa).

Iron-sulfur cluster is bound by residues Cys-125, Cys-129, and Cys-132. Residues Lys-457–Asp-480 form a disordered region.

The enzyme catalyses 5-N(alpha)-glycyl-dTMP in DNA + AH2 + S-adenosyl-L-methionine = 5-C(alpha)-glycyl-dTMP in DNA + 5'-deoxyadenosine + L-methionine + A + H(+). Isomerizes 5-N-alpha-glycinylthymidine (Nalpha-GlyT) into 5-Calpha-glycinylthymidine (Calpha-GlyT) as a step in the pathway leading to thymidine hypermodifications in the viral genome. As a final result of the pathway of hypermodification, 5-aminoethyl-2'-deoxyuridine (5-NedU) substitutes for about 30% of thymidines in the viral DNA. These modifications probably prevent degradation of viral genome by the host restriction-modification antiviral defense system. This chain is Radical SAM Nalpha-GlyT isomerase, found in Pseudomonas phage M6.